The following is a 173-amino-acid chain: 5-hydroxymethyl-dUMP N-hydrolase (173 aa).

Position 2 is an N-acetylalanine (A2). Position 16 (G16) interacts with 5-hydroxymethyl-dUMP. S17 bears the Phosphoserine mark. I18, R19, G20, S87, G89, and E93 together coordinate 5-hydroxymethyl-dUMP. S87 is modified (phosphoserine). Residues S112, S117, S127, and S158 each carry the phosphoserine modification. S117 contributes to the 5-hydroxymethyl-dUMP binding site.

Belongs to the 2'-deoxynucleoside 5'-phosphate N-hydrolase 1 family. In terms of assembly, monomer and homodimer.

The protein resides in the cytoplasm. Its subcellular location is the nucleus. It catalyses the reaction 5-hydroxymethyl-dUMP + H2O = 5-hydroxymethyluracil + 2-deoxy-D-ribose 5-phosphate. Functionally, part of a nucleotide salvage pathway that eliminates epigenetically modified 5-hydroxymethyl-dCMP (hmdCMP) in a two-step process entailing deamination to cytotoxic 5-hydroxymethyl-dUMP (hmdUMP), followed by its hydrolysis into 5-hydroxymethyluracil (hmU) and 2-deoxy-D-ribose 5-phosphate (deoxyribosephosphate). Catalyzes the second step in that pathway, the hydrolysis of the N-glycosidic bond in hmdUMP, degrading this cytotoxic nucleotide to avoid its genomic integration. The polypeptide is 5-hydroxymethyl-dUMP N-hydrolase (Mus musculus (Mouse)).